A 395-amino-acid chain; its full sequence is Flagellin B (395 aa).

Belongs to the bacterial flagellin family.

The protein resides in the secreted. It localises to the bacterial flagellum. Functionally, flagellin is the subunit protein which polymerizes to form the filaments of bacterial flagella. The protein is Flagellin B (flaB) of Rhizobium meliloti (Ensifer meliloti).